A 284-amino-acid chain; its full sequence is D-tagatose-1,6-bisphosphate aldolase subunit GatY (284 aa).

The active-site Proton donor is the D82. Zn(2+) is bound by residues H83 and H180. A dihydroxyacetone phosphate-binding site is contributed by G181. H208 lines the Zn(2+) pocket. Residues G209–S211 and N230–T233 contribute to the dihydroxyacetone phosphate site.

It belongs to the class II fructose-bisphosphate aldolase family. TagBP aldolase GatY subfamily. In terms of assembly, forms a complex with GatZ. The cofactor is Zn(2+).

It carries out the reaction D-tagatofuranose 1,6-bisphosphate = D-glyceraldehyde 3-phosphate + dihydroxyacetone phosphate. Its pathway is carbohydrate metabolism; D-tagatose 6-phosphate degradation; D-glyceraldehyde 3-phosphate and glycerone phosphate from D-tagatose 6-phosphate: step 2/2. Functionally, catalytic subunit of the tagatose-1,6-bisphosphate aldolase GatYZ, which catalyzes the reversible aldol condensation of dihydroxyacetone phosphate (DHAP or glycerone-phosphate) with glyceraldehyde 3-phosphate (G3P) to produce tagatose 1,6-bisphosphate (TBP). Requires GatZ subunit for full activity and stability. Is involved in the catabolism of galactitol. This is D-tagatose-1,6-bisphosphate aldolase subunit GatY from Escherichia coli (strain K12 / MC4100 / BW2952).